The following is a 333-amino-acid chain: MKKIAIDLMGGDFAPAEILAGALSFAKDFKDVELYLVGIEDNFKNVSLPENCKKVTVEDYLPMDIKPTEALRRKKSTMYQSCKLVKENVVDAVVSAGNTGALLACATFVVGRMKNIERPTLAVPIPTKDGFCVLADAGANIDVKPSTLLQFGVMGVEYAKFLGIKNPKVGLLNVGTEENKGTQKEQEAFKLLKEHFKKNFMGNVEGNDINMGKVDVVVADGFHGNIAMKTMEGTAKLIVDVLKSNIKKNIISAIGALLMKSVFNRLKEKLDPRKYGGTFFVGVNGIVVKAHGNSDRIAIYHALKVAKDGIEASLTSNIEEAIRNVWNSRYGRD.

The protein belongs to the PlsX family. As to quaternary structure, homodimer. Probably interacts with PlsY.

It is found in the cytoplasm. It catalyses the reaction a fatty acyl-[ACP] + phosphate = an acyl phosphate + holo-[ACP]. It participates in lipid metabolism; phospholipid metabolism. Its function is as follows. Catalyzes the reversible formation of acyl-phosphate (acyl-PO(4)) from acyl-[acyl-carrier-protein] (acyl-ACP). This enzyme utilizes acyl-ACP as fatty acyl donor, but not acyl-CoA. This is Phosphate acyltransferase from Thermosipho melanesiensis (strain DSM 12029 / CIP 104789 / BI429).